A 293-amino-acid chain; its full sequence is Ribosomal RNA small subunit methyltransferase A (293 aa).

S-adenosyl-L-methionine-binding residues include N38, V40, G65, E86, D116, and N133.

It belongs to the class I-like SAM-binding methyltransferase superfamily. rRNA adenine N(6)-methyltransferase family. RsmA subfamily.

Its subcellular location is the cytoplasm. It catalyses the reaction adenosine(1518)/adenosine(1519) in 16S rRNA + 4 S-adenosyl-L-methionine = N(6)-dimethyladenosine(1518)/N(6)-dimethyladenosine(1519) in 16S rRNA + 4 S-adenosyl-L-homocysteine + 4 H(+). In terms of biological role, specifically dimethylates two adjacent adenosines (A1518 and A1519) in the loop of a conserved hairpin near the 3'-end of 16S rRNA in the 30S particle. May play a critical role in biogenesis of 30S subunits. The sequence is that of Ribosomal RNA small subunit methyltransferase A from Paenarthrobacter aurescens (strain TC1).